A 131-amino-acid polypeptide reads, in one-letter code: Con-Ins Q1b (131 aa).

The signal sequence occupies residues 1 to 24 (MTTSSYFLLVALGLLLYLCQSSFG). Cystine bridges form between cysteine 29/cysteine 107, cysteine 41/cysteine 110, cysteine 53/cysteine 123, and cysteine 109/cysteine 114. The propeptide at 59 to 92 (LQGGTDDARKKRGRASLLRKRRGFLSMLKARAKR) is c peptide. Glutamate 118 carries the 4-carboxyglutamate; partial modification. Serine 130 bears the Serine amide mark.

Belongs to the insulin family. In terms of assembly, heterodimer of A and B chains; disulfide-linked. As to expression, expressed by the venom gland.

Its subcellular location is the secreted. Its function is as follows. This venom insulin facilitates prey capture by rapidly inducing hypoglycemic shock. Intraperitoneal injection of this peptide into zebrafish lowers blood glucose with the same potency than human insulin. In vivo, when applied to water, this peptide reduces overall locomotor activity of zebrafish larvae, observed as a significant decrease in the percentage of time spent swimming and movement frequency. The polypeptide is Con-Ins Q1b (Conus quercinus (Oak cone)).